The sequence spans 1182 residues: NACHT, LRR and PYD domains-containing protein 1a (1182 aa).

Positions 1–23 (MEESQSKQESSTKVAQHEGQEDV) are disordered. Residues 133-442 (QLVIIEGAAG…EFFAAMSYIL (310 aa)) form the NACHT domain. 139–146 (GAAGIGKS) serves as a coordination point for ATP. 3 LRR repeats span residues 634 to 655 (NLEE…SLCT), 691 to 711 (SLTE…KMLC), and 720 to 743 (NLSI…RTLE). Positions 780 to 806 (QQRQQSGDKHMEPLGTEDEFWGPTGPV) are disordered. The tract at residues 799 to 932 (FWGPTGPVTT…HYAVLENPSF (134 aa)) is ZU5. The FIIND domain maps to 799–1082 (FWGPTGPVTT…LRPALPKIAT (284 aa)). The tract at residues 933 to 1082 (SPMGILLRMI…LRPALPKIAT (150 aa)) is UPA. The CARD domain maps to 1092–1175 (HFMDQHREQL…HLVMDILEKL (84 aa)).

The protein belongs to the NLRP family. As to quaternary structure, interacts (via LRR repeats) with BCL2 and BCL2L1 (via the loop between motifs BH4 and BH3). Interacts with NOD2; this interaction is enhanced in the presence of muramyl dipeptide (MDP) and increases IL1B release. Interacts with EIF2AK2/PKR; this interaction requires EIF2AK2 activity, is accompanied by EIF2AK2 autophosphorylation and promotes inflammasome assembly in response to danger-associated signals. Interacts with MEFV; this interaction targets Nlrp1a to degradation by autophagy, hence preventing excessive IL1B- and IL18-mediated inflammation. Interacts with DPP9; leading to inhibit activation of the inflammasome. DPP9 acts via formation of a ternary complex, composed of a DPP9 homodimer, one full-length Nlrp1a protein, and one cleaved C-terminus of Nlrp1a (NACHT, LRR and PYD domains-containing protein 1a, C-terminus). Interacts with DPP8; leading to inhibit activation of the inflammasome, probably via formation of a ternary complex with DPP8. Interacts with the C-terminal part of Nlrp1a (NACHT, LRR and PYD domains-containing protein 1a, C-terminus) in absence of pathogens and other damage-associated signals. In terms of assembly, interacts with the N-terminal part of Nlrp1a (NACHT, LRR and PYD domains-containing protein 1a, N-terminus) in absence of pathogens and other damage-associated signals. Homomultimer; forms the Nlrp1a inflammasome polymeric complex, a filament composed of homopolymers of this form in response to pathogens and other damage-associated signals. Interacts (via CARD domain) with CASP1 (via CARD domain); leading to CASP1 activation. Post-translationally, autocatalytically cleaved. Autocatalytic cleavage in FIIND region occurs constitutively, prior to activation signals, and is required for inflammasome activity (IL1B release), possibly by facilitating CASP1 binding. Both N- and C-terminal parts remain associated non-covalently. In terms of processing, ubiquitinated in response to pathogen-associated signals, leading to its degradation by the proteasome and subsequent release of the cleaved C-terminal part of the protein (NACHT, LRR and PYD domains-containing protein 1a, C-terminus), which polymerizes and forms the Nlrp1a inflammasome. In terms of tissue distribution, highly expressed in hematopoietic stem cells and progenitor cells of both myeloid and lymphoid origin. The expression is highly strain-dependent. Not expressed in Balb/cJ animals, but widely expressed in C57BL/6J. Expressed in macrophages resistant to Bacillus anthracis lethal toxin, but not in toxin-sensitive macrophages, except in CAST/EiJ strain.

The protein localises to the cytoplasm. It is found in the cytosol. The protein resides in the nucleus. It localises to the inflammasome. Its activity is regulated as follows. Nlrp1a inflammasome is activated by pathogens and other damage-associated signals: activation promotes ubiquitination and degradation of the N-terminal part, releasing the cleaved C-terminal part of the protein (NACHT, LRR and PYD domains-containing protein 1a, C-terminus), which polymerizes and forms the Nlrp1a inflammasome. Nlrp1a inflammasome is inhibited by DPP8 and DPP9, which sequester the C-terminal fragment of Nlrp1a (NACHT, LRR and PYD domains-containing protein 1a, C-terminus) in a ternary complex, thereby preventing Nlrp1a oligomerization and activation. Nlrp1a inflammasome is activated by Val-boroPro (Talabostat, PT-100), an inhibitor of dipeptidyl peptidases DPP8 and DPP9. Val-boroPro relieves inhibition of DPP8 and/or DPP9 by promoting disruption of the ternary complex, releasing its C-terminal part from autoinhibition. Functionally, acts as the sensor component of the Nlrp1a inflammasome, which mediates inflammasome activation in response to various pathogen-associated signals, leading to subsequent pyroptosis. Inflammasomes are supramolecular complexes that assemble in the cytosol in response to pathogens and other damage-associated signals and play critical roles in innate immunity and inflammation. Acts as a recognition receptor (PRR): recognizes specific pathogens and other damage-associated signals, and mediates the formation of the inflammasome polymeric complex. In response to pathogen-associated signals, the N-terminal part of Nlrp1a is degraded by the proteasome, releasing the cleaved C-terminal part of the protein (NACHT, LRR and PYD domains-containing protein 1a, C-terminus), which polymerizes to initiate the formation of the inflammasome complex: the inflammasome recruits pro-caspase-1 (proCASP1) and promotes caspase-1 (CASP1) activation, which subsequently cleaves and activates inflammatory cytokines IL1B and IL18 and gasdermin-D (GSDMD), leading to pyroptosis. In the absence of GSDMD expression, the Nlrp1a inflammasome is able to recruit and activate CASP8, leading to activation of gasdermin-E (GSDME). Activation of Nlrp1a inflammasome is also required for HMGB1 secretion; the active cytokines and HMGB1 stimulate inflammatory responses. When activated in the bone marrow, induces the pyroptosis of hematopoietic stem cells and progenitor cells of both myeloid and lymphoid lineages, hence allowing the removal of damaged cells, and the release of IL1B, which induces granulopoiesis. In terms of biological role, constitutes the precursor of the Nlrp1a inflammasome, which mediates autoproteolytic processing within the FIIND domain to generate the N-terminal and C-terminal parts, which are associated non-covalently in absence of pathogens and other damage-associated signals. Its function is as follows. Regulatory part that prevents formation of the Nlrp1a inflammasome: in absence of pathogens and other damage-associated signals, interacts with the C-terminal part of Nlrp1a (NACHT, LRR and PYD domains-containing protein 1a, C-terminus), preventing activation of the Nlrp1a inflammasome. In response to pathogen-associated signals, this part is ubiquitinated and degraded by the proteasome, releasing the cleaved C-terminal part of the protein, which polymerizes and forms the Nlrp1a inflammasome. Constitutes the active part of the Nlrp1a inflammasome. In absence of pathogens and other damage-associated signals, interacts with the N-terminal part of Nlrp1a (NACHT, LRR and PYD domains-containing protein 1a, N-terminus), preventing activation of the Nlrp1a inflammasome. In response to pathogen-associated signals, the N-terminal part of Nlrp1a is degraded by the proteasome, releasing this form, which polymerizes to form the Nlrp1a inflammasome complex: the Nlrp1a inflammasome complex then directly recruits pro-caspase-1 (proCASP1) and promotes caspase-1 (CASP1) activation, leading to gasdermin-D (GSDMD) cleavage and subsequent pyroptosis. The polypeptide is NACHT, LRR and PYD domains-containing protein 1a (Mus musculus (Mouse)).